A 368-amino-acid polypeptide reads, in one-letter code: Homoserine O-acetyltransferase (368 aa).

In terms of domain architecture, AB hydrolase-1 spans 47–349; sequence NAILICHALS…SGEGHDSFLL (303 aa). Serine 153 acts as the Nucleophile in catalysis. Arginine 221 is a substrate binding site. Residues aspartate 311 and histidine 344 contribute to the active site. Aspartate 345 provides a ligand contact to substrate.

This sequence belongs to the AB hydrolase superfamily. MetX family. As to quaternary structure, homodimer.

It localises to the cytoplasm. It catalyses the reaction L-homoserine + acetyl-CoA = O-acetyl-L-homoserine + CoA. It functions in the pathway amino-acid biosynthesis; L-methionine biosynthesis via de novo pathway; O-acetyl-L-homoserine from L-homoserine: step 1/1. Transfers an acetyl group from acetyl-CoA to L-homoserine, forming acetyl-L-homoserine. In Leptospira borgpetersenii serovar Hardjo-bovis (strain JB197), this protein is Homoserine O-acetyltransferase.